The sequence spans 407 residues: 1-deoxy-D-xylulose 5-phosphate reductoisomerase (407 aa).

NADPH-binding residues include Thr-25, Gly-26, Ser-27, Ile-28, Asn-53, and Asn-136. Lys-137 contacts 1-deoxy-D-xylulose 5-phosphate. Glu-138 contacts NADPH. Asp-162 serves as a coordination point for Mn(2+). Ser-163, Glu-164, Ser-188, and His-211 together coordinate 1-deoxy-D-xylulose 5-phosphate. Position 164 (Glu-164) interacts with Mn(2+). Residue Gly-217 participates in NADPH binding. 4 residues coordinate 1-deoxy-D-xylulose 5-phosphate: Ser-224, Asn-229, Lys-230, and Glu-233. A Mn(2+)-binding site is contributed by Glu-233.

This sequence belongs to the DXR family. Mg(2+) serves as cofactor. Mn(2+) is required as a cofactor.

The enzyme catalyses 2-C-methyl-D-erythritol 4-phosphate + NADP(+) = 1-deoxy-D-xylulose 5-phosphate + NADPH + H(+). It participates in isoprenoid biosynthesis; isopentenyl diphosphate biosynthesis via DXP pathway; isopentenyl diphosphate from 1-deoxy-D-xylulose 5-phosphate: step 1/6. Catalyzes the NADPH-dependent rearrangement and reduction of 1-deoxy-D-xylulose-5-phosphate (DXP) to 2-C-methyl-D-erythritol 4-phosphate (MEP). The protein is 1-deoxy-D-xylulose 5-phosphate reductoisomerase of Rhodopseudomonas palustris (strain BisB5).